A 216-amino-acid polypeptide reads, in one-letter code: LexA repressor (216 aa).

A DNA-binding region (H-T-H motif) is located at residues 28–48 (RAEIAAEFGFSSPNAAEEHLR). Active-site for autocatalytic cleavage activity residues include Ser-134 and Lys-171.

It belongs to the peptidase S24 family. Homodimer.

The enzyme catalyses Hydrolysis of Ala-|-Gly bond in repressor LexA.. Represses a number of genes involved in the response to DNA damage (SOS response), including recA and lexA. In the presence of single-stranded DNA, RecA interacts with LexA causing an autocatalytic cleavage which disrupts the DNA-binding part of LexA, leading to derepression of the SOS regulon and eventually DNA repair. The sequence is that of LexA repressor from Ralstonia pickettii (strain 12J).